Consider the following 282-residue polypeptide: NADPH-dependent 7-cyano-7-deazaguanine reductase (282 aa).

Substrate is bound at residue 88–90 (IES). 90–91 (SK) is an NADPH binding site. Residue Cys-190 is the Thioimide intermediate of the active site. Residue Asp-197 is the Proton donor of the active site. Residue 229 to 230 (HE) coordinates substrate. 258–259 (RG) is an NADPH binding site.

This sequence belongs to the GTP cyclohydrolase I family. QueF type 2 subfamily. In terms of assembly, homodimer.

It is found in the cytoplasm. It catalyses the reaction 7-aminomethyl-7-carbaguanine + 2 NADP(+) = 7-cyano-7-deazaguanine + 2 NADPH + 3 H(+). The protein operates within tRNA modification; tRNA-queuosine biosynthesis. Its function is as follows. Catalyzes the NADPH-dependent reduction of 7-cyano-7-deazaguanine (preQ0) to 7-aminomethyl-7-deazaguanine (preQ1). This Escherichia coli O81 (strain ED1a) protein is NADPH-dependent 7-cyano-7-deazaguanine reductase.